Consider the following 225-residue polypeptide: 2-C-methyl-D-erythritol 4-phosphate cytidylyltransferase (225 aa).

Belongs to the IspD/TarI cytidylyltransferase family. IspD subfamily.

The enzyme catalyses 2-C-methyl-D-erythritol 4-phosphate + CTP + H(+) = 4-CDP-2-C-methyl-D-erythritol + diphosphate. It functions in the pathway isoprenoid biosynthesis; isopentenyl diphosphate biosynthesis via DXP pathway; isopentenyl diphosphate from 1-deoxy-D-xylulose 5-phosphate: step 2/6. In terms of biological role, catalyzes the formation of 4-diphosphocytidyl-2-C-methyl-D-erythritol from CTP and 2-C-methyl-D-erythritol 4-phosphate (MEP). The sequence is that of 2-C-methyl-D-erythritol 4-phosphate cytidylyltransferase from Chromobacterium violaceum (strain ATCC 12472 / DSM 30191 / JCM 1249 / CCUG 213 / NBRC 12614 / NCIMB 9131 / NCTC 9757 / MK).